We begin with the raw amino-acid sequence, 417 residues long: NADH-quinone oxidoreductase subunit D (417 aa).

It belongs to the complex I 49 kDa subunit family. As to quaternary structure, NDH-1 is composed of 14 different subunits. Subunits NuoB, C, D, E, F, and G constitute the peripheral sector of the complex.

It is found in the cell inner membrane. The catalysed reaction is a quinone + NADH + 5 H(+)(in) = a quinol + NAD(+) + 4 H(+)(out). Functionally, NDH-1 shuttles electrons from NADH, via FMN and iron-sulfur (Fe-S) centers, to quinones in the respiratory chain. The immediate electron acceptor for the enzyme in this species is believed to be ubiquinone. Couples the redox reaction to proton translocation (for every two electrons transferred, four hydrogen ions are translocated across the cytoplasmic membrane), and thus conserves the redox energy in a proton gradient. The polypeptide is NADH-quinone oxidoreductase subunit D (Burkholderia ambifaria (strain MC40-6)).